The primary structure comprises 424 residues: O-methyltransferase aunD (424 aa).

Position 275 (Asp-275) interacts with S-adenosyl-L-methionine. Residue His-326 is the Proton acceptor of the active site.

The protein belongs to the class I-like SAM-binding methyltransferase superfamily. Cation-independent O-methyltransferase family.

It participates in secondary metabolite biosynthesis. In terms of biological role, O-methyltransferase; part of the gene cluster that mediates the biosynthesis of aurasperone B, a dimeric gamma-naphthopyrone. The first step in the biosynthesis of aurasperone B is the production of gamma-naphthopyrone precursor YWA1 by the non-reducing polyketide synthase albA, via condensation of one acetyl-CoA starter unit with 6 malonyl-CoA units. YWA1 is then methylated by aunE at position C-6 to yield foncesin which is further methylated at position C-8 by aunD to produce fonsecin B. A key enzyme in the biosynthetic pathway is the cytochrome P450 monooxygenase aunB which catalyzes the oxidative dimerization of fonsecin B to aurasperone B. AunB also catalyzes the oxidative dimerization of rubrofusarin B into aurasperone A. The protein is O-methyltransferase aunD of Aspergillus niger (strain ATCC MYA-4892 / CBS 513.88 / FGSC A1513).